Consider the following 518-residue polypeptide: uncharacterized protein (518 aa).

The protein belongs to the MG032/MG096/MG288 family.

This is an uncharacterized protein from Mycoplasma pneumoniae (strain ATCC 29342 / M129 / Subtype 1) (Mycoplasmoides pneumoniae).